The following is a 385-amino-acid chain: Chaperone protein DnaJ (385 aa).

The 66-residue stretch at 3–68 folds into the J domain; the sequence is DYYEILGVTR…QKRAAYDRFG (66 aa). Residues 135 to 213 form a CR-type zinc finger; the sequence is GAEVEITVPA…CHGHGQVRRE (79 aa). Zn(2+) is bound by residues C148, C151, C165, C168, C187, C190, C201, and C204. CXXCXGXG motif repeat units lie at residues 148-155, 165-172, 187-194, and 201-208; these read CEVCEGSG, CGTCGGAG, CPRCGGSG, and CSNCHGHG.

This sequence belongs to the DnaJ family. Homodimer. Zn(2+) serves as cofactor.

Its subcellular location is the cytoplasm. Functionally, participates actively in the response to hyperosmotic and heat shock by preventing the aggregation of stress-denatured proteins and by disaggregating proteins, also in an autonomous, DnaK-independent fashion. Unfolded proteins bind initially to DnaJ; upon interaction with the DnaJ-bound protein, DnaK hydrolyzes its bound ATP, resulting in the formation of a stable complex. GrpE releases ADP from DnaK; ATP binding to DnaK triggers the release of the substrate protein, thus completing the reaction cycle. Several rounds of ATP-dependent interactions between DnaJ, DnaK and GrpE are required for fully efficient folding. Also involved, together with DnaK and GrpE, in the DNA replication of plasmids through activation of initiation proteins. In Caulobacter vibrioides (strain ATCC 19089 / CIP 103742 / CB 15) (Caulobacter crescentus), this protein is Chaperone protein DnaJ.